Here is a 329-residue protein sequence, read N- to C-terminus: Quinolinate synthase (329 aa).

Iminosuccinate contacts are provided by His44 and Ser61. Cys106 contacts [4Fe-4S] cluster. Residues 132–134 (YIN) and Ser149 each bind iminosuccinate. Cys192 is a [4Fe-4S] cluster binding site. Iminosuccinate-binding positions include 218 to 220 (HPE) and Thr235. Cys285 provides a ligand contact to [4Fe-4S] cluster.

It belongs to the quinolinate synthase family. Type 2 subfamily. It depends on [4Fe-4S] cluster as a cofactor.

Its subcellular location is the plastid. The protein localises to the cyanelle. It catalyses the reaction iminosuccinate + dihydroxyacetone phosphate = quinolinate + phosphate + 2 H2O + H(+). Its pathway is cofactor biosynthesis; NAD(+) biosynthesis; quinolinate from iminoaspartate: step 1/1. Catalyzes the condensation of iminoaspartate with dihydroxyacetone phosphate to form quinolinate. The chain is Quinolinate synthase from Cyanophora paradoxa.